A 442-amino-acid polypeptide reads, in one-letter code: ATP-dependent protease ATPase subunit HslU (442 aa).

Residues Ile18 and 60-65 contribute to the ATP site; that span reads GVGKTE. Residues 137–156 are disordered; sequence PKPKNDWESTETDSSSNTRQ. ATP-binding residues include Asp255, Glu320, and Arg392.

Belongs to the ClpX chaperone family. HslU subfamily. As to quaternary structure, a double ring-shaped homohexamer of HslV is capped on each side by a ring-shaped HslU homohexamer. The assembly of the HslU/HslV complex is dependent on binding of ATP.

Its subcellular location is the cytoplasm. ATPase subunit of a proteasome-like degradation complex; this subunit has chaperone activity. The binding of ATP and its subsequent hydrolysis by HslU are essential for unfolding of protein substrates subsequently hydrolyzed by HslV. HslU recognizes the N-terminal part of its protein substrates and unfolds these before they are guided to HslV for hydrolysis. The sequence is that of ATP-dependent protease ATPase subunit HslU from Shewanella baltica (strain OS155 / ATCC BAA-1091).